The chain runs to 433 residues: Glutamate-1-semialdehyde 2,1-aminomutase (433 aa).

Position 273 is an N6-(pyridoxal phosphate)lysine (Lys-273).

It belongs to the class-III pyridoxal-phosphate-dependent aminotransferase family. HemL subfamily. As to quaternary structure, homodimer. The cofactor is pyridoxal 5'-phosphate.

The protein localises to the cytoplasm. The catalysed reaction is (S)-4-amino-5-oxopentanoate = 5-aminolevulinate. The protein operates within porphyrin-containing compound metabolism; protoporphyrin-IX biosynthesis; 5-aminolevulinate from L-glutamyl-tRNA(Glu): step 2/2. It functions in the pathway porphyrin-containing compound metabolism; chlorophyll biosynthesis. This is Glutamate-1-semialdehyde 2,1-aminomutase (hemL) from Synechocystis sp. (strain ATCC 27184 / PCC 6803 / Kazusa).